A 348-amino-acid polypeptide reads, in one-letter code: Noscapine synthase SDR1 (348 aa).

This sequence belongs to the NAD(P)-dependent epimerase/dehydratase family.

It catalyses the reaction narcotine hemiacetal + NAD(+) = noscapine + NADH + H(+). It functions in the pathway alkaloid biosynthesis. Functionally, oxidoreductase that catalyzes the last step in the biosynthesis of the benzylisoquinoline alkaloid noscapine. Converts narcotine hemiacetal to noscapine. The protein is Noscapine synthase SDR1 of Papaver somniferum (Opium poppy).